Here is a 621-residue protein sequence, read N- to C-terminus: Pentatricopeptide repeat-containing protein At1g12620 (621 aa).

16 PPR repeats span residues 36–70, 71–105, 106–140, 141–175, 176–210, 211–245, 246–280, 281–315, 316–350, 351–385, 386–420, 421–455, 456–490, 491–525, 526–560, and 561–595; these read GKVS…RPRP, RLID…GIAH, NLYT…GYEP, DTVT…GHKP, TLIT…GFQP, NEVT…KIKL, DAVK…GFKA, DIII…KITP, DVVA…GISP, DTVT…GCGP, NIRT…GVVA, DTVT…RVRP, DIVS…KMEL, DIGI…GVKP, DVKT…GHSP, and NGCT…GFSV.

The protein belongs to the PPR family. P subfamily.

The polypeptide is Pentatricopeptide repeat-containing protein At1g12620 (Arabidopsis thaliana (Mouse-ear cress)).